The following is a 244-amino-acid chain: Protein A47 (244 aa).

The protein belongs to the orthopoxvirus A47 protein family.

This Homo sapiens (Human) protein is Protein A47.